A 136-amino-acid chain; its full sequence is Histone H3.3C (136 aa).

The segment covering 1–10 (MARTKQTACK) has biased composition (polar residues). The tract at residues 1-39 (MARTKQTACKSTGRKAPRKQLATKAAHKSAPAMGGVKKP) is disordered. Arg-3 bears the Asymmetric dimethylarginine; by PRMT6 mark. Thr-4 carries the phosphothreonine; by HASPIN modification. At Lys-5 the chain carries Allysine; alternate. Lys-5 carries the post-translational modification N6,N6,N6-trimethyllysine; alternate. Lys-5 is modified (N6,N6-dimethyllysine; alternate). An N6-(2-hydroxyisobutyryl)lysine; alternate modification is found at Lys-5. An N6-acetyllysine; alternate modification is found at Lys-5. N6-methyllysine; alternate is present on Lys-5. 5-glutamyl dopamine; alternate is present on Gln-6. Gln-6 carries the post-translational modification 5-glutamyl serotonin; alternate. A Phosphothreonine; by PKC modification is found at Thr-7. Position 10 is an N6-(2-hydroxyisobutyryl)lysine; alternate (Lys-10). Lys-10 bears the N6-lactoyllysine; alternate mark. Lys-10 carries the N6-methylated lysine modification. An ADP-ribosylserine; alternate modification is found at Ser-11. Ser-11 is subject to Phosphoserine; alternate; by AURKB, AURKC, RPS6KA3, RPS6KA4 and RPS6KA5. Thr-12 carries the post-translational modification Phosphothreonine; by PKC. N6-(2-hydroxyisobutyryl)lysine; alternate is present on Lys-15. Lys-15 carries the post-translational modification N6-lactoyllysine; alternate. Lys-15 carries the post-translational modification N6-acetyllysine. The residue at position 15 (Lys-15) is an N6-glutaryllysine; alternate. Arg-18 carries the post-translational modification Asymmetric dimethylarginine. An N6-(2-hydroxyisobutyryl)lysine; alternate mark is found at Lys-19, Lys-24, and Lys-28. The residue at position 19 (Lys-19) is an N6-acetyllysine; alternate. An N6-lactoyllysine; alternate mark is found at Lys-19, Lys-24, and Lys-28. Lys-19, Lys-24, and Lys-28 each carry N6-glutaryllysine; alternate. 2 positions are modified to N6-butyryllysine; alternate: Lys-19 and Lys-24. An N6-methylated lysine; alternate modification is found at Lys-19. Lys-24 carries the post-translational modification N6-acetyllysine. N6-acetyllysine; alternate is present on Lys-28. Position 28 is an N6-methylated lysine; alternate (Lys-28). The residue at position 29 (Ser-29) is an ADP-ribosylserine; alternate. Position 29 is a phosphoserine; alternate; by AURKB, AURKC and RPS6KA5 (Ser-29). Lys-37 is modified (N6-(2-hydroxyisobutyryl)lysine; alternate). The residue at position 37 (Lys-37) is an N6-acetyllysine; alternate. Lys-37 carries the post-translational modification N6-methylated lysine; alternate. Tyr-42 carries the post-translational modification Phosphotyrosine. The residue at position 57 (Lys-57) is an N6-(2-hydroxyisobutyryl)lysine; alternate. Position 57 is an N6-lactoyllysine; alternate (Lys-57). At Lys-57 the chain carries N6-glutaryllysine; alternate. Position 57 is an N6-succinyllysine; alternate (Lys-57). Phosphoserine is present on Ser-58. N6-(2-hydroxyisobutyryl)lysine; alternate occurs at positions 65 and 80. Lys-65 and Lys-80 each carry N6-methylated lysine. Lys-80 carries the N6-lactoyllysine; alternate modification. The residue at position 80 (Lys-80) is an N6-glutaryllysine; alternate. An N6-succinyllysine; alternate modification is found at Lys-80. A Phosphothreonine modification is found at Thr-81. Residues Lys-116 and Lys-123 each carry the N6-acetyllysine; alternate modification. N6-glutaryllysine; alternate occurs at positions 116 and 123. The residue at position 123 (Lys-123) is an N6-(2-hydroxyisobutyryl)lysine; alternate. An N6-methylated lysine; alternate modification is found at Lys-123. At Lys-123 the chain carries N6-succinyllysine; alternate.

Belongs to the histone H3 family. As to quaternary structure, the nucleosome is a histone octamer containing two molecules each of H2A, H2B, H3 and H4 assembled in one H3-H4 heterotetramer and two H2A-H2B heterodimers. The octamer wraps approximately 147 bp of DNA. Acetylation is generally linked to gene activation. Acetylation on Lys-19 (H3K18ac) and Lys-24 (H3K24ac) favors methylation at Arg-18 (H3R17me). Acetylation at Lys-123 (H3K122ac) by EP300/p300 plays a central role in chromatin structure: localizes at the surface of the histone octamer and stimulates transcription, possibly by promoting nucleosome instability. Post-translationally, asymmetric dimethylation at Arg-18 (H3R17me2a) is linked to gene activation. Asymmetric dimethylation at Arg-3 (H3R2me2a) by PRMT6 is linked to gene repression and is mutually exclusive with H3 Lys-5 methylation (H3K4me2 and H3K4me3). H3R2me2a is present at the 3' of genes regardless of their transcription state and is enriched on inactive promoters, while it is absent on active promoters. In terms of processing, methylation at Lys-5 (H3K4me) and Lys-80 (H3K79me) are linked to gene activation. Methylation at Lys-5 (H3K4me) facilitates subsequent acetylation of H3 and H4. Methylation at Lys-80 (H3K79me) is associated with DNA double-strand break (DSB) responses and is a specific target for TP53BP1. Methylation at Lys-10 (H3K9me) and Lys-28 (H3K27me) are linked to gene repression. Methylation at Lys-10 (H3K9me) is a specific target for HP1 proteins (CBX1, CBX3 and CBX5) and prevents subsequent phosphorylation at Ser-11 (H3S10ph) and acetylation of H3 and H4. Methylation at Lys-5 (H3K4me) and Lys-80 (H3K79me) require preliminary monoubiquitination of H2B at 'Lys-120'. Phosphorylated at Thr-4 (H3T3ph) by HASPIN during prophase and dephosphorylated during anaphase. Phosphorylation at Ser-11 (H3S10ph) by AURKB is crucial for chromosome condensation and cell-cycle progression during mitosis and meiosis. In addition phosphorylation at Ser-11 (H3S10ph) by RPS6KA4 and RPS6KA5 is important during interphase because it enables the transcription of genes following external stimulation, like mitogens, stress, growth factors or UV irradiation and result in the activation of genes, such as c-fos and c-jun. Phosphorylation at Ser-11 (H3S10ph), which is linked to gene activation, prevents methylation at Lys-10 (H3K9me) but facilitates acetylation of H3 and H4. Phosphorylation at Ser-11 (H3S10ph) by AURKB mediates the dissociation of HP1 proteins (CBX1, CBX3 and CBX5) from heterochromatin. Phosphorylation at Ser-11 (H3S10ph) is also an essential regulatory mechanism for neoplastic cell transformation. Phosphorylated at Ser-29 (H3S28ph) by MAP3K20 isoform 1, RPS6KA5 or AURKB during mitosis or upon ultraviolet B irradiation. Phosphorylation at Thr-7 (H3T6ph) by PRKCB is a specific tag for epigenetic transcriptional activation that prevents demethylation of Lys-5 (H3K4me) by LSD1/KDM1A. At centromeres, specifically phosphorylated at Thr-12 (H3T11ph) from prophase to early anaphase, by DAPK3 and PKN1. Phosphorylation at Thr-12 (H3T11ph) by PKN1 or isoform M2 of PKM (PKM2) is a specific tag for epigenetic transcriptional activation that promotes demethylation of Lys-10 (H3K9me) by KDM4C/JMJD2C. Phosphorylation at Tyr-42 (H3Y41ph) by JAK2 promotes exclusion of CBX5 (HP1 alpha) from chromatin. Post-translationally, lysine deamination at Lys-5 (H3K4all) to form allysine only takes place on H3K4me3 and results in gene repression. In terms of processing, butyrylation of histones marks active promoters and competes with histone acetylation. It is present during late spermatogenesis. Succinylation at Lys-80 (H3K79succ) by KAT2A takes place with a maximum frequency around the transcription start sites of genes. It gives a specific tag for epigenetic transcription activation. Desuccinylation at Lys-123 (H3K122succ) by SIRT7 in response to DNA damage promotes chromatin condensation and double-strand breaks (DSBs) repair. Post-translationally, serine ADP-ribosylation constitutes the primary form of ADP-ribosylation of proteins in response to DNA damage. Serine ADP-ribosylation at Ser-11 (H3S10ADPr) is mutually exclusive with phosphorylation at Ser-11 (H3S10ph) and impairs acetylation at Lys-10 (H3K9ac).

It is found in the nucleus. Its subcellular location is the chromosome. Its function is as follows. Core component of nucleosome. Nucleosomes wrap and compact DNA into chromatin, limiting DNA accessibility to the cellular machineries which require DNA as a template. Histones thereby play a central role in transcription regulation, DNA repair, DNA replication and chromosomal stability. DNA accessibility is regulated via a complex set of post-translational modifications of histones, also called histone code, and nucleosome remodeling. This Cairina moschata (Muscovy duck) protein is Histone H3.3C.